The chain runs to 246 residues: Electron transfer flavoprotein beta subunit lysine methyltransferase (246 aa).

This sequence belongs to the methyltransferase superfamily. ETFBKMT family.

It is found in the cytoplasm. It localises to the mitochondrion matrix. The catalysed reaction is L-lysyl-[protein] + 3 S-adenosyl-L-methionine = N(6),N(6),N(6)-trimethyl-L-lysyl-[protein] + 3 S-adenosyl-L-homocysteine + 3 H(+). Its function is as follows. Protein-lysine methyltransferase that selectively trimethylates the flavoprotein ETFB in mitochondria. Thereby, may negatively regulate the function of ETFB in electron transfer from Acyl-CoA dehydrogenases to the main respiratory chain. This is Electron transfer flavoprotein beta subunit lysine methyltransferase (etfbkmt) from Xenopus laevis (African clawed frog).